The following is a 430-amino-acid chain: Ribosomal protein uS12 methylthiotransferase RimO (430 aa).

The 117-residue stretch at 2–118 folds into the MTTase N-terminal domain; it reads AKIFTISLGC…IDNVIKRPKH (117 aa). Residues Cys-11, Cys-47, Cys-81, Cys-150, Cys-154, and Cys-157 each coordinate [4Fe-4S] cluster. Residues 136–368 enclose the Radical SAM core domain; the sequence is LTAPHSAYLK…AQSRVIDSIN (233 aa). The TRAM domain occupies 369-430; the sequence is RKLKGKTVKV…KGYNRTGKII (62 aa).

Belongs to the methylthiotransferase family. RimO subfamily. [4Fe-4S] cluster serves as cofactor.

The protein localises to the cytoplasm. It carries out the reaction L-aspartate(89)-[ribosomal protein uS12]-hydrogen + (sulfur carrier)-SH + AH2 + 2 S-adenosyl-L-methionine = 3-methylsulfanyl-L-aspartate(89)-[ribosomal protein uS12]-hydrogen + (sulfur carrier)-H + 5'-deoxyadenosine + L-methionine + A + S-adenosyl-L-homocysteine + 2 H(+). Catalyzes the methylthiolation of an aspartic acid residue of ribosomal protein uS12. In Elusimicrobium minutum (strain Pei191), this protein is Ribosomal protein uS12 methylthiotransferase RimO.